The chain runs to 405 residues: Pleckstrin homology-like domain family A member 1 (405 aa).

Basic and acidic residues-rich tracts occupy residues methionine 1–serine 11 and arginine 54–proline 63. 3 disordered regions span residues methionine 1–serine 67, glutamine 189–leucine 217, and glutamine 293–alanine 405. In terms of domain architecture, PH spans alanine 153–tyrosine 277. Low complexity predominate over residues glutamine 189 to glycine 202. Over residues alanine 204–threonine 213 the composition is skewed to polar residues. The segment covering glutamine 294–proline 309 has biased composition (low complexity). The segment at proline 309–glutamine 344 is 16 X 2 AA repeats of P-Q. Pro residues predominate over residues glutamine 310–glutamine 342. Over residues proline 350 to proline 376 the composition is skewed to basic residues. Positions proline 354–histidine 377 are 11 X 2 AA repeats of P-H. The span at proline 378–histidine 389 shows a compositional bias: low complexity.

As to quaternary structure, interacts with RPL14, EIF3S7 and PABPC4. In terms of tissue distribution, widely expressed with very high levels in adult liver and high levels in adult lung. According to PubMed:10428057 expressed at low levels in liver. Expressed at increased levels in atherosclerotic lesions observed in hyperhomocysteinema.

It is found in the cytoplasm. The protein localises to the cytoplasmic vesicle. The protein resides in the nucleus. It localises to the nucleolus. Functionally, seems to be involved in regulation of apoptosis. May be involved in detachment-mediated programmed cell death. May mediate apoptosis during neuronal development. May be involved in regulation of anti-apoptotic effects of IGF1. Required for TCR-induced apoptosis and expression of TNFRSF6/FAS in a T-cell hybridoma cell line. May be involved in translational regulation. This is Pleckstrin homology-like domain family A member 1 (Phlda1) from Mus musculus (Mouse).